The sequence spans 761 residues: BMP/retinoic acid-inducible neural-specific protein 1 (761 aa).

The N-terminal stretch at 1–22 is a signal peptide; that stretch reads MNWRLVEFLYLLFIWDHILVQP. The region spanning 68-251 is the MACPF domain; it reads RYKIYREFAR…FVQSALSYIM (184 aa). Asn-156, Asn-433, Asn-443, Asn-553, Asn-599, Asn-631, and Asn-677 each carry an N-linked (GlcNAc...) asparagine glycan.

The protein belongs to the BRINP family.

The protein localises to the cytoplasm. In terms of biological role, plays a role in neurogenesis and brain development. May suppress cell cycle progression in postmitotic neurons by inhibiting G1/S transition. This Gallus gallus (Chicken) protein is BMP/retinoic acid-inducible neural-specific protein 1 (BRINP1).